The sequence spans 356 residues: MKKSKLVVALAAILSCAAIPTTVMAESNVQQTMEKSNMSEAKKDLHEIYLAGGCFWGIEAYMERIYGVEDAISGYANGKSDKTNYQKIGITDHAETVKVTYDRNKVSLDKLLKYYFQVIDPTSVNKQGNDRGRQYRTGIYYQDTADKSIIEKEITALQGKYKNKIQIEVEPLHNYIVAEEYHQDYLKKNPNGYCHIDLEQANYVIIDEKDYPKPSDAELKAKLTPLQYSVTQNKNTEHSFSNEYWDNFKPGIYVDVTTGEPLFSSKDKFESGCGWPSFTKPITKEVVTYQDDHSFNMLRTEVISRSGKAHLGHVFDDGPKDKGGLRYCINSAAVKFIPLEDMVKENYGYLTNAVKE.

The interval 46 to 199 is peptide methionine sulfoxide reductase A; sequence HEIYLAGGCF…PNGYCHIDLE (154 aa). C54 is an active-site residue. The region spanning 216–339 is the MsrB domain; that stretch reads DAELKAKLTP…NSAAVKFIPL (124 aa). C328 functions as the Nucleophile in the catalytic mechanism.

It in the N-terminal section; belongs to the MsrA Met sulfoxide reductase family. In the C-terminal section; belongs to the MsrB Met sulfoxide reductase family.

It catalyses the reaction L-methionyl-[protein] + [thioredoxin]-disulfide + H2O = L-methionyl-(S)-S-oxide-[protein] + [thioredoxin]-dithiol. The enzyme catalyses [thioredoxin]-disulfide + L-methionine + H2O = L-methionine (S)-S-oxide + [thioredoxin]-dithiol. It carries out the reaction L-methionyl-[protein] + [thioredoxin]-disulfide + H2O = L-methionyl-(R)-S-oxide-[protein] + [thioredoxin]-dithiol. Its function is as follows. Has an important function as a repair enzyme for proteins that have been inactivated by oxidation. Catalyzes the reversible oxidation-reduction of methionine sulfoxide in proteins to methionine. The chain is Peptide methionine sulfoxide reductase MsrA/MsrB (msrAB) from Aggregatibacter actinomycetemcomitans (Actinobacillus actinomycetemcomitans).